A 222-amino-acid polypeptide reads, in one-letter code: Thiamine-phosphate synthase (222 aa).

4-amino-2-methyl-5-(diphosphooxymethyl)pyrimidine contacts are provided by residues 40–44 (QLRDK) and Asn81. Mg(2+) is bound by residues Asp82 and Asp101. Ser120 lines the 4-amino-2-methyl-5-(diphosphooxymethyl)pyrimidine pocket. Position 146-148 (146-148 (TPT)) interacts with 2-[(2R,5Z)-2-carboxy-4-methylthiazol-5(2H)-ylidene]ethyl phosphate. Lys149 contacts 4-amino-2-methyl-5-(diphosphooxymethyl)pyrimidine. A 2-[(2R,5Z)-2-carboxy-4-methylthiazol-5(2H)-ylidene]ethyl phosphate-binding site is contributed by Gly178.

Belongs to the thiamine-phosphate synthase family. Mg(2+) is required as a cofactor.

It carries out the reaction 2-[(2R,5Z)-2-carboxy-4-methylthiazol-5(2H)-ylidene]ethyl phosphate + 4-amino-2-methyl-5-(diphosphooxymethyl)pyrimidine + 2 H(+) = thiamine phosphate + CO2 + diphosphate. It catalyses the reaction 2-(2-carboxy-4-methylthiazol-5-yl)ethyl phosphate + 4-amino-2-methyl-5-(diphosphooxymethyl)pyrimidine + 2 H(+) = thiamine phosphate + CO2 + diphosphate. The enzyme catalyses 4-methyl-5-(2-phosphooxyethyl)-thiazole + 4-amino-2-methyl-5-(diphosphooxymethyl)pyrimidine + H(+) = thiamine phosphate + diphosphate. The protein operates within cofactor biosynthesis; thiamine diphosphate biosynthesis; thiamine phosphate from 4-amino-2-methyl-5-diphosphomethylpyrimidine and 4-methyl-5-(2-phosphoethyl)-thiazole: step 1/1. Functionally, condenses 4-methyl-5-(beta-hydroxyethyl)thiazole monophosphate (THZ-P) and 2-methyl-4-amino-5-hydroxymethyl pyrimidine pyrophosphate (HMP-PP) to form thiamine monophosphate (TMP). This chain is Thiamine-phosphate synthase, found in Mycobacterium tuberculosis (strain ATCC 25177 / H37Ra).